The chain runs to 414 residues: CCA-adding enzyme (414 aa).

2 residues coordinate ATP: glycine 8 and arginine 11. 2 residues coordinate CTP: glycine 8 and arginine 11. The Mg(2+) site is built by aspartate 21 and aspartate 23. Arginine 91, arginine 137, and arginine 140 together coordinate ATP. Positions 91, 137, and 140 each coordinate CTP.

The protein belongs to the tRNA nucleotidyltransferase/poly(A) polymerase family. Bacterial CCA-adding enzyme type 2 subfamily. Mg(2+) is required as a cofactor.

The enzyme catalyses a tRNA precursor + 2 CTP + ATP = a tRNA with a 3' CCA end + 3 diphosphate. It catalyses the reaction a tRNA with a 3' CCA end + 2 CTP + ATP = a tRNA with a 3' CCACCA end + 3 diphosphate. Functionally, catalyzes the addition and repair of the essential 3'-terminal CCA sequence in tRNAs without using a nucleic acid template. Adds these three nucleotides in the order of C, C, and A to the tRNA nucleotide-73, using CTP and ATP as substrates and producing inorganic pyrophosphate. tRNA 3'-terminal CCA addition is required both for tRNA processing and repair. Also involved in tRNA surveillance by mediating tandem CCA addition to generate a CCACCA at the 3' terminus of unstable tRNAs. While stable tRNAs receive only 3'-terminal CCA, unstable tRNAs are marked with CCACCA and rapidly degraded. The polypeptide is CCA-adding enzyme (Buchnera aphidicola subsp. Acyrthosiphon pisum (strain Tuc7)).